A 598-amino-acid polypeptide reads, in one-letter code: Aspartate--tRNA(Asp/Asn) ligase (598 aa).

L-aspartate is bound at residue Glu177. The aspartate stretch occupies residues 201-204 (QLFK). Arg223 is an L-aspartate binding site. ATP is bound by residues 223 to 225 (RDE) and Gln232. His456 is a binding site for L-aspartate. Glu493 lines the ATP pocket. Residue Arg500 coordinates L-aspartate. Residue 545-548 (GVDR) coordinates ATP.

The protein belongs to the class-II aminoacyl-tRNA synthetase family. Type 1 subfamily. As to quaternary structure, homodimer.

It is found in the cytoplasm. The catalysed reaction is tRNA(Asx) + L-aspartate + ATP = L-aspartyl-tRNA(Asx) + AMP + diphosphate. In terms of biological role, aspartyl-tRNA synthetase with relaxed tRNA specificity since it is able to aspartylate not only its cognate tRNA(Asp) but also tRNA(Asn). Reaction proceeds in two steps: L-aspartate is first activated by ATP to form Asp-AMP and then transferred to the acceptor end of tRNA(Asp/Asn). The chain is Aspartate--tRNA(Asp/Asn) ligase from Prochlorococcus marinus subsp. pastoris (strain CCMP1986 / NIES-2087 / MED4).